Here is a 692-residue protein sequence, read N- to C-terminus: Proprotein convertase subtilisin/kexin type 9 (692 aa).

Positions 1–30 (MGTVSSRRSWWPLPLPLLLLLLLGLAGARA) are cleaved as a signal peptide. Positions 31 to 152 (QEDEDGDYEE…IEEDSSVFAQ (122 aa)) are excised as a propeptide. Y38 bears the Sulfotyrosine mark. A Phosphoserine modification is found at S47. The Inhibitor I9 domain occupies 77 to 149 (TYVVVLKEET…VDYIEEDSSV (73 aa)). Residues 155–444 (PWNLERITPA…VLTPNLVAAL (290 aa)) form the Peptidase S8 domain. Catalysis depends on charge relay system residues D186 and H226. 2 disulfides stabilise this stretch: C223-C255 and C323-C358. The active-site Charge relay system is S386. The interval 450-692 (RAGWQLFCRT…HLVQASQELQ (243 aa)) is C-terminal domain. Disulfide bonds link C457–C527, C477–C526, and C486–C509. An N-linked (GlcNAc...) asparagine glycan is attached at N533. 6 cysteine pairs are disulfide-bonded: C534–C601, C552–C600, C562–C588, C608–C679, C626–C678, and C635–C654. The residue at position 688 (S688) is a Phosphoserine.

It belongs to the peptidase S8 family. As to quaternary structure, monomer. Can self-associate to form dimers and higher multimers which may have increased LDLR degrading activity. The precursor protein but not the mature protein may form multimers. Interacts with APOB, VLDLR, LRP8/APOER2 and BACE1. The full-length immature form (pro-PCSK9) interacts with SCNN1A, SCNN1B and SCNN1G. The pro-PCSK9 form (via C-terminal domain) interacts with LDLR. Interacts (via the C-terminal domain) with ANXA2 (via repeat Annexin 1); the interaction inhibits the degradation of LDLR. Ca(2+) is required as a cofactor. Post-translationally, cleavage by furin and PCSK5 generates a truncated inactive protein that is unable to induce LDLR degradation. Undergoes autocatalytic cleavage in the endoplasmic reticulum to release the propeptide from the N-terminus and the cleavage of the propeptide is strictly required for its maturation and activation. The cleaved propeptide however remains associated with the catalytic domain through non-covalent interactions, preventing potential substrates from accessing its active site. As a result, it is secreted from cells as a propeptide-containing, enzymatically inactive protein. In terms of processing, phosphorylation protects the propeptide against proteolysis.

The protein resides in the cytoplasm. Its subcellular location is the secreted. It localises to the endosome. The protein localises to the lysosome. It is found in the cell surface. The protein resides in the endoplasmic reticulum. Its subcellular location is the golgi apparatus. With respect to regulation, its proteolytic activity is autoinhibited by the non-covalent binding of the propeptide to the catalytic domain. Inhibited by EGTA. Its function is as follows. Crucial player in the regulation of plasma cholesterol homeostasis. Binds to low-density lipid receptor family members: low density lipoprotein receptor (LDLR), very low density lipoprotein receptor (VLDLR), apolipoprotein E receptor (LRP1/APOER) and apolipoprotein receptor 2 (LRP8/APOER2), and promotes their degradation in intracellular acidic compartments. Acts via a non-proteolytic mechanism to enhance the degradation of the hepatic LDLR through a clathrin LDLRAP1/ARH-mediated pathway. May prevent the recycling of LDLR from endosomes to the cell surface or direct it to lysosomes for degradation. Can induce ubiquitination of LDLR leading to its subsequent degradation. Inhibits intracellular degradation of APOB via the autophagosome/lysosome pathway in a LDLR-independent manner. Involved in the disposal of non-acetylated intermediates of BACE1 in the early secretory pathway. Inhibits epithelial Na(+) channel (ENaC)-mediated Na(+) absorption by reducing ENaC surface expression primarily by increasing its proteasomal degradation. Regulates neuronal apoptosis via modulation of LRP8/APOER2 levels and related anti-apoptotic signaling pathways. The sequence is that of Proprotein convertase subtilisin/kexin type 9 (PCSK9) from Colobus guereza (Mantled guereza).